Here is a 161-residue protein sequence, read N- to C-terminus: Nucleotide-binding protein Shewmr4_3156 (161 aa).

This sequence belongs to the YajQ family.

In terms of biological role, nucleotide-binding protein. This is Nucleotide-binding protein Shewmr4_3156 from Shewanella sp. (strain MR-4).